A 316-amino-acid chain; its full sequence is ATP synthase gamma chain (316 aa).

It belongs to the ATPase gamma chain family. In terms of assembly, F-type ATPases have 2 components, CF(1) - the catalytic core - and CF(0) - the membrane proton channel. CF(1) has five subunits: alpha(3), beta(3), gamma(1), delta(1), epsilon(1). CF(0) has three main subunits: a, b and c.

The protein resides in the cellular thylakoid membrane. Produces ATP from ADP in the presence of a proton gradient across the membrane. The gamma chain is believed to be important in regulating ATPase activity and the flow of protons through the CF(0) complex. The chain is ATP synthase gamma chain from Prochlorococcus marinus (strain SARG / CCMP1375 / SS120).